We begin with the raw amino-acid sequence, 435 residues long: Cyclin-dependent kinase 15 (435 aa).

Residues 103–387 (YLNLEKLGEG…AQEALVHDYF (285 aa)) enclose the Protein kinase domain. Residues 109–117 (LGEGSYATV) and K132 each bind ATP. D224 (proton acceptor) is an active-site residue.

Belongs to the protein kinase superfamily. CMGC Ser/Thr protein kinase family. CDC2/CDKX subfamily. The cofactor is Mg(2+).

It carries out the reaction L-seryl-[protein] + ATP = O-phospho-L-seryl-[protein] + ADP + H(+). The enzyme catalyses L-threonyl-[protein] + ATP = O-phospho-L-threonyl-[protein] + ADP + H(+). In terms of biological role, serine/threonine-protein kinase that acts like an antiapoptotic protein that counters TRAIL/TNFSF10-induced apoptosis by inducing phosphorylation of BIRC5 at 'Thr-34'. The protein is Cyclin-dependent kinase 15 (CDK15) of Homo sapiens (Human).